A 293-amino-acid chain; its full sequence is Bifunctional protein FolD (293 aa).

NADP(+) is bound by residues 164 to 166 (GRS), serine 193, and threonine 234.

It belongs to the tetrahydrofolate dehydrogenase/cyclohydrolase family. Homodimer.

The catalysed reaction is (6R)-5,10-methylene-5,6,7,8-tetrahydrofolate + NADP(+) = (6R)-5,10-methenyltetrahydrofolate + NADPH. It carries out the reaction (6R)-5,10-methenyltetrahydrofolate + H2O = (6R)-10-formyltetrahydrofolate + H(+). It functions in the pathway one-carbon metabolism; tetrahydrofolate interconversion. Functionally, catalyzes the oxidation of 5,10-methylenetetrahydrofolate to 5,10-methenyltetrahydrofolate and then the hydrolysis of 5,10-methenyltetrahydrofolate to 10-formyltetrahydrofolate. The sequence is that of Bifunctional protein FolD from Phocaeicola vulgatus (strain ATCC 8482 / DSM 1447 / JCM 5826 / CCUG 4940 / NBRC 14291 / NCTC 11154) (Bacteroides vulgatus).